The sequence spans 90 residues: Putative Fis-like DNA-binding protein (90 aa).

Residues 66–85 constitute a DNA-binding region (H-T-H motif); it reads QSRAAALLGIHRATLRKKLK.

Belongs to the transcriptional regulatory Fis family.

The polypeptide is Putative Fis-like DNA-binding protein (Xylella fastidiosa (strain 9a5c)).